A 1074-amino-acid polypeptide reads, in one-letter code: Semaphorin-5A (1074 aa).

A signal peptide spans M1 to P22. Residues E23–M968 are Extracellular-facing. One can recognise a Sema domain in the interval H35–L484. 2 cysteine pairs are disulfide-bonded: C104/C114 and C131/C140. N-linked (GlcNAc...) asparagine glycosylation is found at N142, N168, N227, and N277. 2 disulfides stabilise this stretch: C254-C357 and C278-C320. N-linked (GlcNAc...) asparagine glycosylation is found at N323, N367, and N437. Disulfide bonds link C487–C504 and C496–C513. N-linked (GlcNAc...) asparagine glycosylation is found at N536 and N591. TSP type-1 domains follow at residues D540–S593, N595–P651, H653–P702, T707–T765, N784–P839, D841–P896, and E897–S944. Intrachain disulfides connect C607/C644, C611/C650, C622/C634, C665/C696, C669/C701, and C680/C686. N-linked (GlcNAc...) asparagine glycosylation is present at N717. Disulfide bonds link C796–C833, C800–C838, C811–C823, C853–C890, C857–C895, and C868–C880. N-linked (GlcNAc...) asparagine glycosylation is present at N933. Residues F969–V989 traverse the membrane as a helical segment. Residues Y990–Y1074 lie on the Cytoplasmic side of the membrane.

This sequence belongs to the semaphorin family. Binds PLXNB3.

The protein localises to the membrane. In terms of biological role, bifunctional axonal guidance cue regulated by sulfated proteoglycans; attractive effects result from interactions with heparan sulfate proteoglycans (HSPGs), while the inhibitory effects depend on interactions with chondroitin sulfate proteoglycans (CSPGs). Ligand for receptor PLXNB3. In glioma cells, SEMA5A stimulation of PLXNB3 results in the disassembly of F-actin stress fibers, disruption of focal adhesions and cellular collapse as well as inhibition of cell migration and invasion through ARHGDIA-mediated inactivation of RAC1. May promote angiogenesis by increasing endothelial cell proliferation and migration and inhibiting apoptosis. The polypeptide is Semaphorin-5A (SEMA5A) (Homo sapiens (Human)).